Consider the following 273-residue polypeptide: Dermonecrotic toxin LapSicTox-alphaIB1aiii (273 aa).

H5 is an active-site residue. Residues E25 and D27 each coordinate Mg(2+). H41 serves as the catalytic Nucleophile. Disulfide bonds link C45–C51 and C47–C190. D85 provides a ligand contact to Mg(2+). Residue N250 is glycosylated (N-linked (GlcNAc...) asparagine).

This sequence belongs to the arthropod phospholipase D family. Class II subfamily. It depends on Mg(2+) as a cofactor. As to expression, expressed by the venom gland.

It localises to the secreted. It carries out the reaction an N-(acyl)-sphingosylphosphocholine = an N-(acyl)-sphingosyl-1,3-cyclic phosphate + choline. It catalyses the reaction an N-(acyl)-sphingosylphosphoethanolamine = an N-(acyl)-sphingosyl-1,3-cyclic phosphate + ethanolamine. The catalysed reaction is a 1-acyl-sn-glycero-3-phosphocholine = a 1-acyl-sn-glycero-2,3-cyclic phosphate + choline. The enzyme catalyses a 1-acyl-sn-glycero-3-phosphoethanolamine = a 1-acyl-sn-glycero-2,3-cyclic phosphate + ethanolamine. Functionally, dermonecrotic toxins cleave the phosphodiester linkage between the phosphate and headgroup of certain phospholipids (sphingolipid and lysolipid substrates), forming an alcohol (often choline) and a cyclic phosphate. This toxin acts on sphingomyelin (SM). It may also act on ceramide phosphoethanolamine (CPE), lysophosphatidylcholine (LPC) and lysophosphatidylethanolamine (LPE), but not on lysophosphatidylserine (LPS), and lysophosphatidylglycerol (LPG). It acts by transphosphatidylation, releasing exclusively cyclic phosphate products as second products. Induces dermonecrosis, hemolysis, increased vascular permeability, edema, inflammatory response, and platelet aggregation. The protein is Dermonecrotic toxin LapSicTox-alphaIB1aiii of Loxosceles apachea (Apache recluse spider).